A 229-amino-acid chain; its full sequence is ATP synthase subunit a 3 (229 aa).

6 helical membrane passes run 25–45, 86–106, 111–131, 142–162, 181–201, and 202–222; these read ADAVSYTWLIIALLLLLSFLA, VATIGIFVLVSNLIGLIPGFF, NINTTAACAIVVFLSTHVVGI, FCGPILWLTPIMFFIEVIGHL, LVLIIFFGLAPFLVPLPMMLM, and GVLVSFIQAFVFMLLTMIYIQ.

The protein belongs to the ATPase A chain family. As to quaternary structure, F-type ATPases have 2 components, CF(1) - the catalytic core - and CF(0) - the membrane proton channel. CF(1) has five subunits: alpha(3), beta(3), gamma(1), delta(1), epsilon(1). CF(0) has three main subunits: a(1), b(2) and c(9-12). The alpha and beta chains form an alternating ring which encloses part of the gamma chain. CF(1) is attached to CF(0) by a central stalk formed by the gamma and epsilon chains, while a peripheral stalk is formed by the delta and b chains.

Its subcellular location is the cell inner membrane. In terms of biological role, key component of the proton channel; it plays a direct role in the translocation of protons across the membrane. In Pelobacter propionicus (strain DSM 2379 / NBRC 103807 / OttBd1), this protein is ATP synthase subunit a 3.